Reading from the N-terminus, the 566-residue chain is Oxygen-dependent choline dehydrogenase (566 aa).

7-36 (DYIICGAGSAGNVLATRLTEDPDVTVLLLE) contributes to the FAD binding site. A disordered region spans residues 180–202 (NGYQQEGFGPMDRTVTPKGRRAS). Residue His474 is the Proton acceptor of the active site.

It belongs to the GMC oxidoreductase family. The cofactor is FAD.

It carries out the reaction choline + A = betaine aldehyde + AH2. The catalysed reaction is betaine aldehyde + NAD(+) + H2O = glycine betaine + NADH + 2 H(+). It functions in the pathway amine and polyamine biosynthesis; betaine biosynthesis via choline pathway; betaine aldehyde from choline (cytochrome c reductase route): step 1/1. Involved in the biosynthesis of the osmoprotectant glycine betaine. Catalyzes the oxidation of choline to betaine aldehyde and betaine aldehyde to glycine betaine at the same rate. This is Oxygen-dependent choline dehydrogenase from Burkholderia cenocepacia (strain HI2424).